The sequence spans 449 residues: Signal recognition particle protein (449 aa).

Residues 109-116, 191-195, and 249-252 each bind GTP; these read GLQGSGKT, DTAGR, and SRID.

Belongs to the GTP-binding SRP family. SRP54 subfamily. Part of the signal recognition particle protein translocation system, which is composed of SRP and FtsY. SRP is a ribonucleoprotein composed of Ffh and a 4.5S RNA molecule.

Its subcellular location is the cytoplasm. It catalyses the reaction GTP + H2O = GDP + phosphate + H(+). Functionally, involved in targeting and insertion of nascent membrane proteins into the cytoplasmic membrane. Binds to the hydrophobic signal sequence of the ribosome-nascent chain (RNC) as it emerges from the ribosomes. The SRP-RNC complex is then targeted to the cytoplasmic membrane where it interacts with the SRP receptor FtsY. Interaction with FtsY leads to the transfer of the RNC complex to the Sec translocase for insertion into the membrane, the hydrolysis of GTP by both Ffh and FtsY, and the dissociation of the SRP-FtsY complex into the individual components. In Rickettsia conorii (strain ATCC VR-613 / Malish 7), this protein is Signal recognition particle protein.